The following is a 1005-amino-acid chain: Translocated actin-recruiting phosphoprotein (1005 aa).

Over residues 1 to 10 (MTNSISGYQP) the composition is skewed to polar residues. Disordered regions lie at residues 1–36 (MTNS…SVST), 73–155 (APNV…SNYD), 487–521 (INWG…SPTP), 542–626 (DTNV…DGPA), 671–749 (GSAQ…GPSG), and 792–847 (TGTS…TSLM). Low complexity-rich tracts occupy residues 11-36 (TVTT…SVST) and 73-121 (APNV…SSDH). The span at 130–154 (GSNSGDISNNYDDVGSNNGDISSNY) shows a compositional bias: polar residues. Composition is skewed to low complexity over residues 542–578 (DTNV…TDDI), 593–612 (GDIS…VSSS), 720–736 (SSSG…SSES), and 831–846 (STTT…TTSL).

This sequence belongs to the chlamydial CPn_0572/CT_456/TC_0741 family. Post-translationally, phosphorylated on a tyrosine on attachment to the host cell. Tyrosine phosphorylation is temporally and spatially associated with recruitment of actin to the site of chlamydial entry. Phosphorylated Tarp seems to remain cytoplasmically exposed on the inclusion membrane at one side of internalized elementary bodies for several hours after entry.

It localises to the secreted. Appears to initiate or participate in signaling events that regulate the actin recruitment, which ultimately leads to internalization. The protein is Translocated actin-recruiting phosphoprotein (tarP) of Chlamydia trachomatis serovar D (strain ATCC VR-885 / DSM 19411 / UW-3/Cx).